The primary structure comprises 258 residues: MLTITAIPAFNDNYFWIVRQADSNFAYVVDPGVAQPVIDYILAHDLILAGVLITHKHADHVGGIQGLQDFYQNSLPVYGPKAEGIAGITHEIIDERTLCLPHLEANVEIIPVPGHTLGHHAYLIEDAIFCGDTLFSVGCGRIFEGSAAQMLASLTKLASLPAHCKIYCAHEYTQSNINFALTVTPNNPNLLQYASWVAKARADNIPSLPSFLSTELAVNPFLRCHTYEVKTAVASQFNTEINDELQTFTLLRKWKDNF.

Positions 55, 57, 59, 60, 115, 132, and 170 each coordinate Zn(2+).

This sequence belongs to the metallo-beta-lactamase superfamily. Glyoxalase II family. In terms of assembly, monomer. The cofactor is Zn(2+).

The catalysed reaction is an S-(2-hydroxyacyl)glutathione + H2O = a 2-hydroxy carboxylate + glutathione + H(+). It participates in secondary metabolite metabolism; methylglyoxal degradation; (R)-lactate from methylglyoxal: step 2/2. Functionally, thiolesterase that catalyzes the hydrolysis of S-D-lactoyl-glutathione to form glutathione and D-lactic acid. This is Hydroxyacylglutathione hydrolase from Shewanella denitrificans (strain OS217 / ATCC BAA-1090 / DSM 15013).